Reading from the N-terminus, the 324-residue chain is MKPSIILYKALPDDLLHRLEEHFTVTQVPNLRPETVEQHAQAFASAEGLLGSSETVNSALLEKMPKLRAASTVSVGYDNFDVAALNARSVLLMHTPTVLTETVADTVMALVLSTARRVVEVAERVKVGEWTKSIGPDWFGTDVHHKTLGIVGMGRIGLALAQRAHFGFNMPILYNARRHHPEAEERFNARYCDLDTLLQAADFVCLILPLTEETHHLFGAAQFAKMKSSAIFINAGRGPVVDETALIAALQSGEIHAAGLDVFEQEPLPVDSPLLSLPNVVALPHIGSATHETRYNMAACAVDNLIDALQGKVEKNCVNPQVAG.

Active-site residues include R237 and E266. H285 (proton donor) is an active-site residue.

Belongs to the D-isomer specific 2-hydroxyacid dehydrogenase family. GhrB subfamily. As to quaternary structure, homodimer.

The protein localises to the cytoplasm. The catalysed reaction is glycolate + NADP(+) = glyoxylate + NADPH + H(+). It catalyses the reaction (R)-glycerate + NAD(+) = 3-hydroxypyruvate + NADH + H(+). The enzyme catalyses (R)-glycerate + NADP(+) = 3-hydroxypyruvate + NADPH + H(+). Catalyzes the NADPH-dependent reduction of glyoxylate and hydroxypyruvate into glycolate and glycerate, respectively. This Citrobacter koseri (strain ATCC BAA-895 / CDC 4225-83 / SGSC4696) protein is Glyoxylate/hydroxypyruvate reductase B.